Consider the following 646-residue polypeptide: uncharacterized protein (646 aa).

8 helical membrane passes run Ile-20–Leu-42, Phe-55–Val-77, Leu-97–Leu-115, Tyr-127–Trp-149, Ile-159–Leu-181, Ile-188–Ala-206, Tyr-216–Phe-238, and Trp-251–Ala-273.

The protein localises to the cell membrane. This is an uncharacterized protein from Bacillus subtilis (strain 168).